The sequence spans 105 residues: Large ribosomal subunit protein uL24 (105 aa).

This sequence belongs to the universal ribosomal protein uL24 family. In terms of assembly, part of the 50S ribosomal subunit.

In terms of biological role, one of two assembly initiator proteins, it binds directly to the 5'-end of the 23S rRNA, where it nucleates assembly of the 50S subunit. Its function is as follows. One of the proteins that surrounds the polypeptide exit tunnel on the outside of the subunit. The protein is Large ribosomal subunit protein uL24 of Sorangium cellulosum (strain So ce56) (Polyangium cellulosum (strain So ce56)).